The sequence spans 278 residues: Elongation factor Ts (278 aa).

Residues 82–85 (TDFV) are involved in Mg(2+) ion dislocation from EF-Tu.

It belongs to the EF-Ts family.

The protein resides in the cytoplasm. Associates with the EF-Tu.GDP complex and induces the exchange of GDP to GTP. It remains bound to the aminoacyl-tRNA.EF-Tu.GTP complex up to the GTP hydrolysis stage on the ribosome. The protein is Elongation factor Ts of Streptomyces avermitilis (strain ATCC 31267 / DSM 46492 / JCM 5070 / NBRC 14893 / NCIMB 12804 / NRRL 8165 / MA-4680).